The primary structure comprises 1141 residues: cGMP-inhibited 3',5'-cyclic phosphodiesterase 3A (1141 aa).

The tract at residues 1-42 (MAVPGDAARVRDKPVHSGVSQAPTAGRDCHHRADPASPRDSG) is disordered. 6 consecutive transmembrane segments (helical) span residues 61-81 (LSSA…VRLV), 130-150 (LQPS…GLYL), 160-180 (AVAL…GLGV), 185-205 (LLSL…TWLV), 210-230 (LGVL…ISLE), and 232-252 (FKVA…ILLA). Residue Ser-312 is modified to Phosphoserine. Residues Ser-428 and Ser-438 each carry the phosphoserine; by PKA and PKC modification. Positions 436–448 (RVSSTWTTTTSAT) are enriched in low complexity. Residues 436–482 (RVSSTWTTTTSATGLPTLEPAPVRRDRSTSIKLQEAPSSSPDSWNNP) form a disordered region. A compositionally biased stretch (polar residues) spans 465-482 (SIKLQEAPSSSPDSWNNP). 3 positions are modified to phosphoserine: Ser-492, Ser-520, and Ser-524. The tract at residues 590 to 640 (RPYSQGNPADEPLERSGVATRTPSRTDDTAQVTSDYETNNNSDSSDIVQNE) is disordered. A compositionally biased stretch (polar residues) spans 608–637 (ATRTPSRTDDTAQVTSDYETNNNSDSSDIV). The interval 669-1141 (KPILAPEPLV…EEIPTQKPDQ (473 aa)) is interaction with SLFN12. The region spanning 674 to 1093 (PEPLVMDNLD…KMWKKVIEEE (420 aa)) is the PDEase domain. His-752 (proton donor) is an active-site residue. His-752 contributes to the AMP binding site. His-756, His-836, Asp-837, and Asp-950 together coordinate Mn(2+). Positions 837, 950, and 1001 each coordinate AMP. Asp-837 is a binding site for Mg(2+). Disordered regions lie at residues 1023 to 1062 (PGKW…ESPK) and 1100 to 1141 (ENQS…KPDQ). The span at 1029–1056 (DSDESGDTDDPEEEEEEAPAPNEEETCE) shows a compositional bias: acidic residues. Ser-1033 carries the phosphoserine modification. At Thr-1036 the chain carries Phosphothreonine. Residues 1100–1113 (ENQSLDQTPQSHSS) are compositionally biased toward polar residues. Lys-1120 participates in a covalent cross-link: Glycyl lysine isopeptide (Lys-Gly) (interchain with G-Cter in SUMO2). Over residues 1125–1141 (EKGKPRGEEIPTQKPDQ) the composition is skewed to basic and acidic residues.

This sequence belongs to the cyclic nucleotide phosphodiesterase family. PDE3 subfamily. As to quaternary structure, homodimer. Interacts with SLFN12; direct low affinity interaction which is stimulated by binding of 17beta-estradiol/E2 to PDE3A and that positively regulates the ribonuclease activity of SLFN12. Mn(2+) is required as a cofactor. It depends on Mg(2+) as a cofactor.

The protein localises to the membrane. It is found in the cytoplasm. It localises to the cytosol. The enzyme catalyses a nucleoside 3',5'-cyclic phosphate + H2O = a nucleoside 5'-phosphate + H(+). It carries out the reaction 3',5'-cyclic AMP + H2O = AMP + H(+). It catalyses the reaction 3',5'-cyclic GMP + H2O = GMP + H(+). The catalysed reaction is 3',5'-cyclic UMP + H2O = UMP + H(+). With respect to regulation, inhibited by cGMP. Inhibited by 17beta-estradiol. Inhibited by milrinone. Cyclic nucleotide phosphodiesterase with specificity for the second messengers cAMP and cGMP, which are key regulators of many important physiological processes. Also has activity toward cUMP. Independently of its catalytic activity it is part of an E2/17beta-estradiol-induced pro-apoptotic signaling pathway. E2 stabilizes the PDE3A/SLFN12 complex in the cytosol, promoting the dephosphorylation of SLFN12 and activating its pro-apoptotic ribosomal RNA/rRNA ribonuclease activity. This apoptotic pathway might be relevant in tissues with high concentration of E2 and be for instance involved in placenta remodeling. The sequence is that of cGMP-inhibited 3',5'-cyclic phosphodiesterase 3A from Homo sapiens (Human).